The primary structure comprises 173 residues: MANQELIDALRDAEAVKFGEFELSHGGTSEYYVDKYVFETDPGCLRQIADAFADRVGDAKLAGVALGAVPLVAATAVETDSPYVIVRKQKKEYGTGNQIEGDFDAGEEVVVLEDIATTGQSAIDAVEALREAGATVDRVIVVVDREEGARENLAEHDIELESLVTASDLLADR.

Residues Arg-87, Lys-88, Lys-91, and 113–121 contribute to the 5-phospho-alpha-D-ribose 1-diphosphate site; that span reads EDIATTGQS. Orotate is bound by residues Thr-117 and Arg-145.

It belongs to the purine/pyrimidine phosphoribosyltransferase family. PyrE subfamily. Homodimer. The cofactor is Mg(2+).

The catalysed reaction is orotidine 5'-phosphate + diphosphate = orotate + 5-phospho-alpha-D-ribose 1-diphosphate. The protein operates within pyrimidine metabolism; UMP biosynthesis via de novo pathway; UMP from orotate: step 1/2. In terms of biological role, catalyzes the transfer of a ribosyl phosphate group from 5-phosphoribose 1-diphosphate to orotate, leading to the formation of orotidine monophosphate (OMP). This chain is Orotate phosphoribosyltransferase, found in Natronomonas pharaonis (strain ATCC 35678 / DSM 2160 / CIP 103997 / JCM 8858 / NBRC 14720 / NCIMB 2260 / Gabara) (Halobacterium pharaonis).